The following is a 239-amino-acid chain: tRNA (guanine-N(7)-)-methyltransferase (239 aa).

Residues Glu-69, Glu-94, Asp-121, and Asp-144 each coordinate S-adenosyl-L-methionine. Residue Asp-144 is part of the active site. Residue Lys-148 participates in substrate binding. Residues 150 to 155 (RHNKRR) form an interaction with RNA region. Residues Asp-180 and 217-220 (TKFE) contribute to the substrate site.

It belongs to the class I-like SAM-binding methyltransferase superfamily. TrmB family. In terms of assembly, monomer.

It catalyses the reaction guanosine(46) in tRNA + S-adenosyl-L-methionine = N(7)-methylguanosine(46) in tRNA + S-adenosyl-L-homocysteine. The protein operates within tRNA modification; N(7)-methylguanine-tRNA biosynthesis. Functionally, catalyzes the formation of N(7)-methylguanine at position 46 (m7G46) in tRNA. The sequence is that of tRNA (guanine-N(7)-)-methyltransferase from Sodalis glossinidius (strain morsitans).